The chain runs to 478 residues: Amino acid oxidase imqH (478 aa).

The first 22 residues, 1–22, serve as a signal peptide directing secretion; sequence MPAPKSIIIVGSGVFGLSTAHA. Valine 14, phenylalanine 15, aspartate 38, asparagine 53, alanine 57, asparagine 58, arginine 63, and isoleucine 64 together coordinate FAD. N-linked (GlcNAc...) asparagine glycans are attached at residues asparagine 97 and asparagine 167. An FAD-binding site is contributed by valine 208. Position 399 is an S-8alpha-FAD cysteine (cysteine 399). Phenylalanine 432 and lysine 433 together coordinate FAD.

The protein belongs to the MSOX/MTOX family. As to quaternary structure, dimer. It depends on FAD as a cofactor.

It functions in the pathway secondary metabolite biosynthesis. Its function is as follows. Nonribosomal peptide synthetase; part of the gene cluster that mediates the biosynthesis of imizoquins A to D, tripeptide-derived alkaloids that serve a protective role against oxidative stress that are essential for normal germination. ImqB is a canonical three-module NRPS that assembles the tripeptide backbone of the imizoquins via condensation of Trp, Tyr, and Leu-derived precursors. N-methylation by imqF and phenol oxidation by imqC, followed by cyclization via the FAD-dependent oxidase imqH carry out the three-step transformation of L-tyrosine into tetrahydroisoquinoline. Importantly, this sequence requires the presence of a free amine in the tyrosine moiety, indicating that isoquinoline formation occurs prior to peptide bond formation. The imidazolidin-4-one ring of imizoquins could form following additional oxidation of the methyl-derived bridgehead carbon by imqH. Lastly, O-methylation by imqG and leucine hydroxylation by imqE complete biosynthesis of the imizoquins. This Aspergillus flavus (strain ATCC 200026 / FGSC A1120 / IAM 13836 / NRRL 3357 / JCM 12722 / SRRC 167) protein is Amino acid oxidase imqH.